We begin with the raw amino-acid sequence, 75 residues long: Exodeoxyribonuclease 7 small subunit (75 aa).

Belongs to the XseB family. As to quaternary structure, heterooligomer composed of large and small subunits.

It localises to the cytoplasm. It carries out the reaction Exonucleolytic cleavage in either 5'- to 3'- or 3'- to 5'-direction to yield nucleoside 5'-phosphates.. Bidirectionally degrades single-stranded DNA into large acid-insoluble oligonucleotides, which are then degraded further into small acid-soluble oligonucleotides. This Thermoanaerobacter sp. (strain X514) protein is Exodeoxyribonuclease 7 small subunit.